The primary structure comprises 230 residues: V-type proton ATPase subunit E (230 aa).

Belongs to the V-ATPase E subunit family. As to quaternary structure, V-ATPase is a heteromultimeric enzyme composed of a peripheral catalytic V1 complex (components A to H) attached to an integral membrane V0 proton pore complex (components: a, c, c', c'', d, e, f and VOA1).

Its subcellular location is the vacuole membrane. Subunit of the V1 complex of vacuolar(H+)-ATPase (V-ATPase), a multisubunit enzyme composed of a peripheral complex (V1) that hydrolyzes ATP and a membrane integral complex (V0) that translocates protons. V-ATPase is responsible for acidifying and maintaining the pH of intracellular compartments. In Neurospora crassa (strain ATCC 24698 / 74-OR23-1A / CBS 708.71 / DSM 1257 / FGSC 987), this protein is V-type proton ATPase subunit E.